The primary structure comprises 339 residues: Protein RETICULATA-RELATED 2, chloroplastic (339 aa).

Residues 1–58 (MAAMAAKLHISTKSDQSNVRLPRLINLSRDPTARVLFPRNGSVSSLHTNFSSPNIMVP) constitute a chloroplast transit peptide. Residues 68–86 (IGNHGGGSGSGGGGGGYGG) show a composition bias toward gly residues. The segment at 68–92 (IGNHGGGSGSGGGGGGYGGSEEEES) is disordered. 2 helical membrane passes run 148 to 168 (FVFS…YLLA) and 213 to 233 (VFAT…NGLI).

Belongs to the RETICULATA family.

The protein localises to the plastid. Its subcellular location is the chloroplast membrane. Its function is as follows. May play a role in leaf development. The chain is Protein RETICULATA-RELATED 2, chloroplastic from Arabidopsis thaliana (Mouse-ear cress).